Reading from the N-terminus, the 118-residue chain is Large ribosomal subunit protein bL20 (118 aa).

It belongs to the bacterial ribosomal protein bL20 family.

Binds directly to 23S ribosomal RNA and is necessary for the in vitro assembly process of the 50S ribosomal subunit. It is not involved in the protein synthesizing functions of that subunit. This is Large ribosomal subunit protein bL20 from Sulfurimonas denitrificans (strain ATCC 33889 / DSM 1251) (Thiomicrospira denitrificans (strain ATCC 33889 / DSM 1251)).